We begin with the raw amino-acid sequence, 366 residues long: tRNA(Met) cytidine acetate ligase (366 aa).

Residues 7–20 (VAEFNPFHYGHKYL), Gly-96, Asn-152, and Arg-175 contribute to the ATP site.

It belongs to the TmcAL family.

The protein localises to the cytoplasm. It carries out the reaction cytidine(34) in elongator tRNA(Met) + acetate + ATP = N(4)-acetylcytidine(34) in elongator tRNA(Met) + AMP + diphosphate. Its function is as follows. Catalyzes the formation of N(4)-acetylcytidine (ac(4)C) at the wobble position of elongator tRNA(Met), using acetate and ATP as substrates. First activates an acetate ion to form acetyladenylate (Ac-AMP) and then transfers the acetyl group to tRNA to form ac(4)C34. The protein is tRNA(Met) cytidine acetate ligase of Streptococcus uberis (strain ATCC BAA-854 / 0140J).